A 372-amino-acid chain; its full sequence is Spermidine/putrescine import ATP-binding protein PotA (372 aa).

The 231-residue stretch at 12–242 (IQLKGLNKSF…PTNLFVARFI (231 aa)) folds into the ABC transporter domain. Residue 44–51 (GPSGCGKT) participates in ATP binding.

The protein belongs to the ABC transporter superfamily. Spermidine/putrescine importer (TC 3.A.1.11.1) family. The complex is composed of two ATP-binding proteins (PotA), two transmembrane proteins (PotB and PotC) and a solute-binding protein (PotD).

Its subcellular location is the cell inner membrane. The catalysed reaction is ATP + H2O + polyamine-[polyamine-binding protein]Side 1 = ADP + phosphate + polyamineSide 2 + [polyamine-binding protein]Side 1.. Part of the ABC transporter complex PotABCD involved in spermidine/putrescine import. Responsible for energy coupling to the transport system. The protein is Spermidine/putrescine import ATP-binding protein PotA of Photobacterium profundum (strain SS9).